Here is a 155-residue protein sequence, read N- to C-terminus: uncharacterized protein (155 aa).

The HTH asnC-type domain maps to 4–65; the sequence is IDEIDEVIVR…VVDPSFFGEF (62 aa). Residues 23-42 constitute a DNA-binding region (H-T-H motif); that stretch reads LTELGRKVGLTASAVKNRIE.

This is an uncharacterized protein from Pyrococcus horikoshii (strain ATCC 700860 / DSM 12428 / JCM 9974 / NBRC 100139 / OT-3).